The chain runs to 208 residues: MGKLVVLNHPLIDHKMALIRDKNTSTKTFRETVGEIGALITYEITKDLETVEIEVETPIQKTICRQLKKQLVIVPILRAGLGMVNGIHDMVPSAKIGHIGLYRDEKSLEPVSYYAKFPTDILDGVVLVVDPMLATGGSATAAITELKNRGAKDVRFVGLVGCPEGVKRLQMDHPDVPIYLAALDEKLNEVGYIVPGLGDAGDRLFGTK.

5-phospho-alpha-D-ribose 1-diphosphate-binding positions include arginine 78, arginine 103, and 130-138; that span reads DPMLATGGS. Residues isoleucine 193 and 198-200 contribute to the uracil site; that span reads GDA. 5-phospho-alpha-D-ribose 1-diphosphate is bound at residue aspartate 199.

It belongs to the UPRTase family. It depends on Mg(2+) as a cofactor.

It catalyses the reaction UMP + diphosphate = 5-phospho-alpha-D-ribose 1-diphosphate + uracil. It participates in pyrimidine metabolism; UMP biosynthesis via salvage pathway; UMP from uracil: step 1/1. Allosterically activated by GTP. Catalyzes the conversion of uracil and 5-phospho-alpha-D-ribose 1-diphosphate (PRPP) to UMP and diphosphate. The sequence is that of Uracil phosphoribosyltransferase from Acholeplasma laidlawii (strain PG-8A).